The following is a 129-amino-acid chain: Glycine cleavage system H protein (129 aa).

One can recognise a Lipoyl-binding domain in the interval 23–105 (SAVVGITEHA…YGEGWLAKFS (83 aa)). At K64 the chain carries N6-lipoyllysine.

The protein belongs to the GcvH family. The glycine cleavage system is composed of four proteins: P, T, L and H. (R)-lipoate serves as cofactor.

Functionally, the glycine cleavage system catalyzes the degradation of glycine. The H protein shuttles the methylamine group of glycine from the P protein to the T protein. This chain is Glycine cleavage system H protein, found in Herpetosiphon aurantiacus (strain ATCC 23779 / DSM 785 / 114-95).